Consider the following 423-residue polypeptide: UDP-N-acetylglucosamine 1-carboxyvinyltransferase (423 aa).

Residue 22-23 coordinates phosphoenolpyruvate; that stretch reads KN. Residue R98 coordinates UDP-N-acetyl-alpha-D-glucosamine. The Proton donor role is filled by C122. C122 carries the post-translational modification 2-(S-cysteinyl)pyruvic acid O-phosphothioketal. UDP-N-acetyl-alpha-D-glucosamine contacts are provided by residues 127–131, D311, and I333; that span reads RPVDQ.

Belongs to the EPSP synthase family. MurA subfamily.

It is found in the cytoplasm. It carries out the reaction phosphoenolpyruvate + UDP-N-acetyl-alpha-D-glucosamine = UDP-N-acetyl-3-O-(1-carboxyvinyl)-alpha-D-glucosamine + phosphate. Its pathway is cell wall biogenesis; peptidoglycan biosynthesis. In terms of biological role, cell wall formation. Adds enolpyruvyl to UDP-N-acetylglucosamine. The chain is UDP-N-acetylglucosamine 1-carboxyvinyltransferase from Stenotrophomonas maltophilia (strain K279a).